A 455-amino-acid chain; its full sequence is Golgi pH regulator A (455 aa).

5 helical membrane-spanning segments follow: residues 5–25, 46–66, 79–99, 114–134, and 150–170; these read IDSS…WLFF, VTFA…LGVL, LCVI…YFIV, CLLW…FPIL, and VGVI…VNCP. N-linked (GlcNAc...) asparagine glycans are attached at residues Asn180 and Asn243. 4 helical membrane passes run 290–310, 343–363, 378–398, and 425–445; these read GYFF…NIVF, ISFI…LITL, VIVL…VLLI, and WFDV…YLAH.

This sequence belongs to the Golgi pH regulator (TC 1.A.38) family. As to quaternary structure, homotrimer. Interacts with RABL3; the interaction stabilizes GPR89A. As to expression, ubiquitous.

The protein localises to the golgi apparatus membrane. It catalyses the reaction iodide(out) = iodide(in). The catalysed reaction is chloride(in) = chloride(out). The enzyme catalyses bromide(in) = bromide(out). It carries out the reaction fluoride(in) = fluoride(out). Its function is as follows. Voltage-gated channel that enables the transfer of monoatomic anions such as iodide, chloride, bromide and fluoride which may function in counter-ion conductance and participates in Golgi acidification. Plays a role in lymphocyte development, probably by acting as a RABL3 effector in hematopoietic cells. This Homo sapiens (Human) protein is Golgi pH regulator A.